Reading from the N-terminus, the 475-residue chain is ATP synthase subunit beta, chloroplastic (475 aa).

ATP is bound at residue 155–162 (GGAGVGKT).

Belongs to the ATPase alpha/beta chains family. In terms of assembly, F-type ATPases have 2 components, CF(1) - the catalytic core - and CF(0) - the membrane proton channel. CF(1) has five subunits: alpha(3), beta(3), gamma(1), delta(1), epsilon(1). CF(0) has four main subunits: a(1), b(1), b'(1) and c(9-12).

The protein resides in the plastid. It is found in the chloroplast thylakoid membrane. The enzyme catalyses ATP + H2O + 4 H(+)(in) = ADP + phosphate + 5 H(+)(out). In terms of biological role, produces ATP from ADP in the presence of a proton gradient across the membrane. The catalytic sites are hosted primarily by the beta subunits. This chain is ATP synthase subunit beta, chloroplastic, found in Porphyra purpurea (Red seaweed).